A 1215-amino-acid chain; its full sequence is von Willebrand factor A domain-containing protein 5B1 (1215 aa).

Positions 1-18 (MPGLLNCLTGAALPLMES) are cleaved as a signal peptide. The VIT domain occupies 19–141 (DVTSYVSGYA…NVTVFISTSS (123 aa)). N-linked (GlcNAc...) asparagine glycosylation occurs at N132. A VWFA domain is found at 353–532 (EFIFLIDRSN…KAMAPVLSDV (180 aa)). Positions 595–674 (SVFYPSQDEG…DPTGTARRYP (80 aa)) are disordered. Polar residues-rich tracts occupy residues 608–621 (GSGNCAKNVNQGQT) and 646–667 (YSTNQISSHKTCPRATTASDPT). Phosphotyrosine is present on Y879. Disordered stretches follow at residues 934-953 (GSSAGLGRPQSMLREHSSAA), 964-999 (QDSPTSTFNKTPSPGHEKQTTAEGPPQNLSASAPSS), and 1100-1121 (SPQDCTSLSSSPPSCDGISLKS). Composition is skewed to polar residues over residues 964-975 (QDSPTSTFNKTP), 990-999 (QNLSASAPSS), and 1100-1112 (SPQDCTSLSSSPP).

Its subcellular location is the secreted. This Mus musculus (Mouse) protein is von Willebrand factor A domain-containing protein 5B1 (Vwa5b1).